The primary structure comprises 948 residues: Receptor-like protein 45 (948 aa).

The first 26 residues, 1–26, serve as a signal peptide directing secretion; sequence MSSSKLMDFGLTWIIMMMILLQGCRS. Over 27 to 897 the chain is Extracellular; it reads CIESERQGLL…EDDDESGLLD (871 aa). 2 N-linked (GlcNAc...) asparagine glycosylation sites follow: Asn-99 and Asn-113. LRR repeat units lie at residues 106-129 and 135-162; these read FEEL…RKGG and LRNL…AVSL. One copy of the LRR 3; degenerate repeat lies at 163 to 183; that stretch reads KTLILHDNLFKGGFPVQELIN. Asn-183 carries an N-linked (GlcNAc...) asparagine glycan. 25 LRR repeats span residues 184 to 208, 210 to 233, 234 to 257, 258 to 284, 286 to 306, 307 to 332, 334 to 357, 358 to 381, 382 to 404, 405 to 429, 430 to 453, 454 to 477, 479 to 502, 503 to 526, 527 to 549, 550 to 573, 575 to 595, 596 to 618, 619 to 640, 642 to 665, 666 to 689, 758 to 782, 783 to 805, 807 to 831, and 833 to 855; these read LTSL…ELTN, RNLR…GICR, LEQL…CFSR, FSKL…DFKS, EYLS…LITE, LTEL…VSGG, QSQL…LWYQ, QELR…LLEN, NTEL…PRTM, RRLQ…GLIL, ASLR…MARM, ENIE…LFTG, YSLS…SSDE, TSLI…LLNL, RMLS…WLGN, FFLE…LFNI, YLWL…LRSS, SDYG…DTLW, YGLR…LFRS, PSIS…LCGL, SNVR…VTNL, LNQM…LGDL, KRVR…SFSN, RSIE…TLLQ, and LVVF…QFNT. Residue Asn-328 is glycosylated (N-linked (GlcNAc...) asparagine). N-linked (GlcNAc...) asparagine glycosylation is found at Asn-381 and Asn-392. Residues Asn-436 and Asn-465 are each glycosylated (N-linked (GlcNAc...) asparagine). Asn-608 is a glycosylation site (N-linked (GlcNAc...) asparagine). N-linked (GlcNAc...) asparagine glycosylation is found at Asn-653, Asn-679, and Asn-688. Residue Asn-789 is glycosylated (N-linked (GlcNAc...) asparagine). 2 N-linked (GlcNAc...) asparagine glycosylation sites follow: Asn-837 and Asn-842. The helical transmembrane segment at 898 to 918 threads the bilayer; the sequence is IVVLWWSLGTTYVTVMMGFLV. Over 919 to 948 the chain is Cytoplasmic; the sequence is FLCFDSPWRRAWFCLVDTFIDRVKDVLGVI.

This sequence belongs to the RLP family.

Its subcellular location is the cell membrane. This Arabidopsis thaliana (Mouse-ear cress) protein is Receptor-like protein 45.